The chain runs to 127 residues: Aspartate 1-decarboxylase (127 aa).

Serine 25 acts as the Schiff-base intermediate with substrate; via pyruvic acid in catalysis. A Pyruvic acid (Ser) modification is found at serine 25. Threonine 57 contacts substrate. The active-site Proton donor is tyrosine 58. 73 to 75 (GAA) is a binding site for substrate.

The protein belongs to the PanD family. Heterooctamer of four alpha and four beta subunits. Pyruvate serves as cofactor. In terms of processing, is synthesized initially as an inactive proenzyme, which is activated by self-cleavage at a specific serine bond to produce a beta-subunit with a hydroxyl group at its C-terminus and an alpha-subunit with a pyruvoyl group at its N-terminus.

It localises to the cytoplasm. It carries out the reaction L-aspartate + H(+) = beta-alanine + CO2. It participates in cofactor biosynthesis; (R)-pantothenate biosynthesis; beta-alanine from L-aspartate: step 1/1. Functionally, catalyzes the pyruvoyl-dependent decarboxylation of aspartate to produce beta-alanine. This is Aspartate 1-decarboxylase from Listeria monocytogenes serotype 4b (strain CLIP80459).